The chain runs to 175 residues: Putative lipoprotein LppP (175 aa).

An N-terminal signal peptide occupies residues 1–30 (MRRQRSAVPILALLALLALLALIVGLGASG). Residue cysteine 31 is the site of N-palmitoyl cysteine attachment. Residue cysteine 31 is the site of S-diacylglycerol cysteine attachment.

It is found in the cell membrane. The chain is Putative lipoprotein LppP (lppP) from Mycobacterium bovis (strain ATCC BAA-935 / AF2122/97).